Here is a 466-residue protein sequence, read N- to C-terminus: Dihydrolipoyl dehydrogenase 3 (466 aa).

FAD is bound by residues 33–42, Lys51, and Gly115; that span reads EGRSTLGGTC. Residues Cys42 and Cys47 are joined by a disulfide bond. Residues 181 to 185, Glu204, Val238, and 271 to 274 contribute to the NAD(+) site; these read GAGVI and AIGR. 2 residues coordinate FAD: Asp313 and Ala321. The active-site Proton acceptor is the His445.

The protein belongs to the class-I pyridine nucleotide-disulfide oxidoreductase family. In terms of assembly, homodimer. FAD is required as a cofactor.

The protein localises to the cytoplasm. The catalysed reaction is N(6)-[(R)-dihydrolipoyl]-L-lysyl-[protein] + NAD(+) = N(6)-[(R)-lipoyl]-L-lysyl-[protein] + NADH + H(+). In terms of biological role, LPD-3 may substitute for lipoamide dehydrogenase of the 2-oxoglutarate dehydrogenase and pyruvate multienzyme complexes when the latter is inactive or missing. The polypeptide is Dihydrolipoyl dehydrogenase 3 (lpd3) (Pseudomonas putida (Arthrobacter siderocapsulatus)).